Consider the following 299-residue polypeptide: Cold shock protein 1 (299 aa).

Residue A2 is modified to N-acetylalanine. In terms of domain architecture, CSD spans 12 to 76; it reads TGKVNWFNAS…GKTKAVNVTA (65 aa). The tract at residues 76 to 97 is disordered; it reads APGGGSLKKENNSRGNGARRGG. 7 CCHC-type zinc fingers span residues 100–117, 132–149, 164–181, 198–215, 230–247, 253–270, and 280–297; these read SGCYNCGELGHISKDCGI, EGCYNCGDTGHFARDCTS, DGCYTCGDVGHVARDCTQ, DGCYTCGDVGHFARDCTQ, GTCYSCGGVGHIARDCAT, RGCYQCGGSGHLARDCDQ, and NACYKCGKEGHFARECSS.

The protein belongs to the cold shock protein (CSP) family. Mostly expressed in shoot apices and siliques, and, to a lower extent, in roots, cotyledons, stems, shoots, leaves, floral buds and flowers.

It localises to the nucleus. It is found in the cytoplasm. In terms of biological role, chaperone that binds to RNA, single- (ssDNA) and double-stranded (dsDNA) DNA, and unwinds nucleic acid duplex. Exhibits a DNA melting activity. May be involved in cold resistance. Prevents seed germination under dehydration or salt stress conditions. The sequence is that of Cold shock protein 1 (CSP1) from Arabidopsis thaliana (Mouse-ear cress).